We begin with the raw amino-acid sequence, 876 residues long: Valine--tRNA ligase (876 aa).

The 'HIGH' region motif lies at 44–54 (PNVTGKLHLGH). A 'KMSKS' region motif is present at residues 520-524 (KMSKS). Residue lysine 523 participates in ATP binding. Positions 805-876 (LEGLIDMDKE…VKSRIEQLKA (72 aa)) form a coiled coil.

Belongs to the class-I aminoacyl-tRNA synthetase family. ValS type 1 subfamily. In terms of assembly, monomer.

The protein resides in the cytoplasm. The catalysed reaction is tRNA(Val) + L-valine + ATP = L-valyl-tRNA(Val) + AMP + diphosphate. Its function is as follows. Catalyzes the attachment of valine to tRNA(Val). As ValRS can inadvertently accommodate and process structurally similar amino acids such as threonine, to avoid such errors, it has a 'posttransfer' editing activity that hydrolyzes mischarged Thr-tRNA(Val) in a tRNA-dependent manner. In Staphylococcus epidermidis (strain ATCC 35984 / DSM 28319 / BCRC 17069 / CCUG 31568 / BM 3577 / RP62A), this protein is Valine--tRNA ligase.